Here is a 176-residue protein sequence, read N- to C-terminus: uncharacterized protein (176 aa).

Residues 15-28 show a composition bias toward polar residues; it reads TSSNPPASASQSTG. Disordered regions lie at residues 15-100 and 125-176; these read TSSN…TSAG and ASLR…NLGA. A compositionally biased stretch (basic and acidic residues) spans 43-52; that stretch reads FIDKVTDKPS.

This is an uncharacterized protein from Homo sapiens (Human).